Consider the following 374-residue polypeptide: Protein Brevis radix-like 2 (374 aa).

Disordered stretches follow at residues 12-43 (NTNN…IKSL) and 57-80 (AYKS…ADSD). The span at 65–80 (SGSSNQNKNRSYADSD) shows a compositional bias: polar residues. Residues 143-198 (KEWVAQVEPGVLITFVSLPEGGNDMKRIRFSREMFDKWQAQKWWAENFDKVMELYN) form the BRX 1 domain. The segment at 205-316 (QSVPLPTPPR…EELSVSNASD (112 aa)) is disordered. Polar residues-rich tracts occupy residues 246–259 (SSGS…TQTQ) and 267–288 (GLAT…SSVD). The span at 289–307 (ESARSSFSREEEEADHSGE) shows a compositional bias: basic and acidic residues. One can recognise a BRX 2 domain in the interval 319–374 (TEWVEQDEAGVYITIRALPDGTRELRRVRFSREKFGETNARLWWEQNRARIQQQYL).

The protein belongs to the BRX family. Expressed in roots.

It localises to the nucleus. This chain is Protein Brevis radix-like 2 (BRXL2), found in Arabidopsis thaliana (Mouse-ear cress).